The following is a 274-amino-acid chain: Nitrogenase iron protein (274 aa).

8–15 (GKGGIGKS) contributes to the ATP binding site. Residue cysteine 94 participates in [4Fe-4S] cluster binding. An ADP-ribosylarginine; by dinitrogenase reductase ADP-ribosyltransferase modification is found at arginine 97. A [4Fe-4S] cluster-binding site is contributed by cysteine 131.

This sequence belongs to the NifH/BchL/ChlL family. In terms of assembly, homodimer. [4Fe-4S] cluster is required as a cofactor. Post-translationally, the reversible ADP-ribosylation of Arg-97 inactivates the nitrogenase reductase and regulates nitrogenase activity.

The catalysed reaction is N2 + 8 reduced [2Fe-2S]-[ferredoxin] + 16 ATP + 16 H2O = H2 + 8 oxidized [2Fe-2S]-[ferredoxin] + 2 NH4(+) + 16 ADP + 16 phosphate + 6 H(+). In terms of biological role, the key enzymatic reactions in nitrogen fixation are catalyzed by the nitrogenase complex, which has 2 components: the iron protein and the molybdenum-iron protein. The polypeptide is Nitrogenase iron protein (Chlorobium phaeobacteroides (strain DSM 266 / SMG 266 / 2430)).